Reading from the N-terminus, the 641-residue chain is MAEDLETMKPSQAPQQPSLPQGSSKTYRSAEHSQALLSGLVALRDSGILFDVVLKVEGKSIEAHRILLAASCDYFRGMFAGGLKEMDQREVQIHGVSYSAMCRIMDFIYTSDLALSVNNVQETLTAACQLQISEVIQFCCDFLVSWVDEENVLELYKLADIFHLNRLTEQLDTFVLKNFITFSQTQMYRQLPLDKVFSLLNSNRLEVASENEVYEGALLYHYTPEQLEKDQVSLLESPKLLEAVRFPLMDLAILQRLHDKLGLCPLKTTVLKALEYHKNESMQPVMQGPNTQLRSEFHCVVGFGGMYSAPYTVLSDQVKYLNPLLGEWRPLTAPHAPRMSNQGIAVLNNFVYLIGGDNNVRGYRAEARCWRYDPRHSRWFQIQSMQQPRADLSVCVLGDFLYAVAGRDYHDELKEVERYDPFTNTWEYVAPLQKQVHAHAAAALDGRMYVACGRRGNTYLKDTFCYDPERDQWASVALSPVRRAWHGMAALQEKIYLIGGSNDDEGFRQDVLEVACYSPKTDQWTLVSPLPAGHGEPGIAVLAKKIFVLGGRSHNQGDRTDYVHVYEAERDYWEDGPRLEDDISGMAACVLTLPRSVLMDTDVWTQEMYMQYMDPVQNLADNASEVMSVSDWEDLDNSGED.

Positions 1 to 25 are disordered; the sequence is MAEDLETMKPSQAPQQPSLPQGSSK. Residues 10 to 24 show a composition bias toward low complexity; it reads PSQAPQQPSLPQGSS. In terms of domain architecture, BTB spans 50 to 117; it reads FDVVLKVEGK…IYTSDLALSV (68 aa). Kelch repeat units follow at residues 299–349, 350–399, 400–446, 448–493, 494–544, and 545–593; these read CVVG…VLNN, FVYL…VLGD, FLYA…ALDG, MYVA…ALQE, KIYL…VLAK, and KIFV…VLTL.

In terms of assembly, component of the BCR(KLHL22) E3 ubiquitin ligase complex, at least composed of cul3, klhl22 and rbx1.

The protein resides in the cytoplasm. Its subcellular location is the cytosol. It is found in the cytoskeleton. The protein localises to the microtubule organizing center. It localises to the centrosome. The protein resides in the spindle. Its subcellular location is the nucleus. It is found in the lysosome. It functions in the pathway protein modification; protein ubiquitination. Its function is as follows. Substrate-specific adapter of a BCR (BTB-CUL3-RBX1) E3 ubiquitin ligase complex. The BCR(KLHL22) ubiquitin ligase complex could mediate the monoubiquitination of PLK1 and regulate its activity in spindle assembly checkpoint (SAC) and chromosome segregation. The BCR(KLHL22) ubiquitin ligase complex may also be responsible for the ubiquitin-dependent proteasomal degradation of DEPDC5 and the activation of the TORC1 pathway. In Xenopus tropicalis (Western clawed frog), this protein is Kelch-like protein 22 (klhl22).